The chain runs to 350 residues: Protein RecA (350 aa).

68-75 (GPESSGKT) provides a ligand contact to ATP.

This sequence belongs to the RecA family.

Its subcellular location is the cytoplasm. Can catalyze the hydrolysis of ATP in the presence of single-stranded DNA, the ATP-dependent uptake of single-stranded DNA by duplex DNA, and the ATP-dependent hybridization of homologous single-stranded DNAs. It interacts with LexA causing its activation and leading to its autocatalytic cleavage. The polypeptide is Protein RecA (Mycolicibacterium vanbaalenii (strain DSM 7251 / JCM 13017 / BCRC 16820 / KCTC 9966 / NRRL B-24157 / PYR-1) (Mycobacterium vanbaalenii)).